We begin with the raw amino-acid sequence, 95 residues long: UPF0358 protein BA_4159/GBAA_4159/BAS3861 (95 aa).

Belongs to the UPF0358 family.

This chain is UPF0358 protein BA_4159/GBAA_4159/BAS3861, found in Bacillus anthracis.